A 304-amino-acid polypeptide reads, in one-letter code: MSGRDFGYVIQSSAALWNRLSTFSQRGKALDTRLADIKKALGKPYYETSDVLLYHGDSLELLKSMPQQIFDLTVTSPPYNIGKEYEGVLSIEEYISWCETWMSRVHRATSAGGAFWLNVGYVPVPNQGKAVPIPYLLWDKSPFYMIQEVVWNYGAGVASRKSFSPRNEKFLWYVRDPLNYYFDLDSVRDPNVKYPNQKKNGKLKCNPLGKNPTDVWQFPKVTSGAKRSSVERTAHPAQFPSAVIERVIKACSPSDGVILDPFLGSGTTSLTARKQGRCSVGIEIREDYLDIAVGRLEAEAQSLF.

Belongs to the N(4)/N(6)-methyltransferase family. N(4) subfamily.

It catalyses the reaction a 2'-deoxycytidine in DNA + S-adenosyl-L-methionine = an N(4)-methyl-2'-deoxycytidine in DNA + S-adenosyl-L-homocysteine + H(+). Its function is as follows. A methylase that recognizes the double-stranded sequence 5'-AGTACT-3', methylates C-5 on both strands, and protects the DNA from cleavage by the ScaI endonuclease. This Streptomyces caespitosus protein is Type II methyltransferase M.ScaI.